We begin with the raw amino-acid sequence, 239 residues long: ATP-dependent dethiobiotin synthetase BioD (239 aa).

15-20 (EIGKTF) provides a ligand contact to ATP. Threonine 19 provides a ligand contact to Mg(2+). Lysine 40 is a catalytic residue. Residues aspartate 57, 118-121 (EGVG), 178-179 (NH), and 211-213 (AHL) each bind ATP. 2 residues coordinate Mg(2+): aspartate 57 and glutamate 118.

Belongs to the dethiobiotin synthetase family. As to quaternary structure, homodimer. Mg(2+) serves as cofactor.

It is found in the cytoplasm. The enzyme catalyses (7R,8S)-7,8-diammoniononanoate + CO2 + ATP = (4R,5S)-dethiobiotin + ADP + phosphate + 3 H(+). It functions in the pathway cofactor biosynthesis; biotin biosynthesis; biotin from 7,8-diaminononanoate: step 1/2. Catalyzes a mechanistically unusual reaction, the ATP-dependent insertion of CO2 between the N7 and N8 nitrogen atoms of 7,8-diaminopelargonic acid (DAPA, also called 7,8-diammoniononanoate) to form a ureido ring. The chain is ATP-dependent dethiobiotin synthetase BioD from Burkholderia ambifaria (strain MC40-6).